Reading from the N-terminus, the 227-residue chain is Uridylate kinase (227 aa).

An ATP-binding site is contributed by 11–12 (GS). Residue G45 participates in UMP binding. 2 residues coordinate ATP: G46 and R50. UMP is bound by residues D67 and 114–120 (TEPGHTT). Positions 140, 146, and 149 each coordinate ATP.

This sequence belongs to the UMP kinase family. In terms of assembly, homohexamer.

It is found in the cytoplasm. The catalysed reaction is UMP + ATP = UDP + ADP. It participates in pyrimidine metabolism; CTP biosynthesis via de novo pathway; UDP from UMP (UMPK route): step 1/1. Its activity is regulated as follows. Inhibited by UTP. Functionally, catalyzes the reversible phosphorylation of UMP to UDP. This Thermoplasma volcanium (strain ATCC 51530 / DSM 4299 / JCM 9571 / NBRC 15438 / GSS1) protein is Uridylate kinase.